Reading from the N-terminus, the 331-residue chain is Phosphoribosylformylglycinamidine cyclo-ligase (331 aa).

It belongs to the AIR synthase family.

It is found in the cytoplasm. It carries out the reaction 2-formamido-N(1)-(5-O-phospho-beta-D-ribosyl)acetamidine + ATP = 5-amino-1-(5-phospho-beta-D-ribosyl)imidazole + ADP + phosphate + H(+). It participates in purine metabolism; IMP biosynthesis via de novo pathway; 5-amino-1-(5-phospho-D-ribosyl)imidazole from N(2)-formyl-N(1)-(5-phospho-D-ribosyl)glycinamide: step 2/2. In Clostridium botulinum (strain Langeland / NCTC 10281 / Type F), this protein is Phosphoribosylformylglycinamidine cyclo-ligase.